The primary structure comprises 582 residues: Probable DNA ligase (582 aa).

Glutamate 248 serves as a coordination point for ATP. Lysine 250 (N6-AMP-lysine intermediate) is an active-site residue. The ATP site is built by arginine 255, arginine 270, glutamate 299, phenylalanine 339, arginine 416, and lysine 422.

Belongs to the ATP-dependent DNA ligase family. The cofactor is Mg(2+).

It catalyses the reaction ATP + (deoxyribonucleotide)n-3'-hydroxyl + 5'-phospho-(deoxyribonucleotide)m = (deoxyribonucleotide)n+m + AMP + diphosphate.. Functionally, DNA ligase that seals nicks in double-stranded DNA during DNA replication, DNA recombination and DNA repair. In Persephonella marina (strain DSM 14350 / EX-H1), this protein is Probable DNA ligase.